Reading from the N-terminus, the 354-residue chain is Uroporphyrinogen decarboxylase (354 aa).

Substrate is bound by residues 27-31 (RQAGR), Asp77, Tyr154, Ser209, and His327.

Belongs to the uroporphyrinogen decarboxylase family. In terms of assembly, homodimer.

The protein localises to the cytoplasm. It catalyses the reaction uroporphyrinogen III + 4 H(+) = coproporphyrinogen III + 4 CO2. Its pathway is porphyrin-containing compound metabolism; protoporphyrin-IX biosynthesis; coproporphyrinogen-III from 5-aminolevulinate: step 4/4. Catalyzes the decarboxylation of four acetate groups of uroporphyrinogen-III to yield coproporphyrinogen-III. In Shewanella loihica (strain ATCC BAA-1088 / PV-4), this protein is Uroporphyrinogen decarboxylase.